The chain runs to 325 residues: Beta-ketoacyl-[acyl-carrier-protein] synthase III (325 aa).

Active-site residues include Cys-116 and His-252. Positions 253 to 257 are ACP-binding; that stretch reads QANLR. The active site involves Asn-282.

Belongs to the thiolase-like superfamily. FabH family. Homodimer.

It is found in the cytoplasm. The catalysed reaction is malonyl-[ACP] + acetyl-CoA + H(+) = 3-oxobutanoyl-[ACP] + CO2 + CoA. It functions in the pathway lipid metabolism; fatty acid biosynthesis. In terms of biological role, catalyzes the condensation reaction of fatty acid synthesis by the addition to an acyl acceptor of two carbons from malonyl-ACP. Catalyzes the first condensation reaction which initiates fatty acid synthesis and may therefore play a role in governing the total rate of fatty acid production. Possesses both acetoacetyl-ACP synthase and acetyl transacylase activities. Its substrate specificity determines the biosynthesis of branched-chain and/or straight-chain of fatty acids. This chain is Beta-ketoacyl-[acyl-carrier-protein] synthase III, found in Xanthomonas campestris pv. campestris (strain ATCC 33913 / DSM 3586 / NCPPB 528 / LMG 568 / P 25).